The following is a 393-amino-acid chain: Autophagy-related protein 18c (393 aa).

WD repeat units lie at residues 27 to 65 (KEEA…ETFR), 70 to 114 (DGGF…CISE), 199 to 239 (AHDS…RLQE), and 244 to 283 (VDRA…VGED).

This sequence belongs to the WD repeat PROPPIN family. Component of the PI(3,5)P2 regulatory complex at least composed of ATG18, SAC/FIG4, FAB1 and VAC14. In terms of tissue distribution, expressed in roots, stems, flowers and leaves.

It localises to the preautophagosomal structure membrane. The protein localises to the vacuole membrane. Functionally, the PI(3,5)P2 regulatory complex regulates both the synthesis and turnover of phosphatidylinositol 3,5-bisphosphate (PtdIns(3,5)P2). Required for autophagy. This chain is Autophagy-related protein 18c (ATG18C), found in Arabidopsis thaliana (Mouse-ear cress).